A 397-amino-acid polypeptide reads, in one-letter code: Formate-dependent phosphoribosylglycinamide formyltransferase (397 aa).

N(1)-(5-phospho-beta-D-ribosyl)glycinamide is bound by residues 22–23 and glutamate 82; that span reads EL. ATP is bound by residues arginine 114, lysine 155, 160 to 165, 195 to 198, and glutamate 203; these read SSGKGQ and EGFV. The 194-residue stretch at 119-312 folds into the ATP-grasp domain; sequence CLAAEELSLP…EFALHARAIL (194 aa). Residues glutamate 271 and glutamate 283 each contribute to the Mg(2+) site. N(1)-(5-phospho-beta-D-ribosyl)glycinamide is bound by residues aspartate 290, lysine 360, and 367-368; that span reads RR.

This sequence belongs to the PurK/PurT family. As to quaternary structure, homodimer.

The catalysed reaction is N(1)-(5-phospho-beta-D-ribosyl)glycinamide + formate + ATP = N(2)-formyl-N(1)-(5-phospho-beta-D-ribosyl)glycinamide + ADP + phosphate + H(+). Its pathway is purine metabolism; IMP biosynthesis via de novo pathway; N(2)-formyl-N(1)-(5-phospho-D-ribosyl)glycinamide from N(1)-(5-phospho-D-ribosyl)glycinamide (formate route): step 1/1. Its function is as follows. Involved in the de novo purine biosynthesis. Catalyzes the transfer of formate to 5-phospho-ribosyl-glycinamide (GAR), producing 5-phospho-ribosyl-N-formylglycinamide (FGAR). Formate is provided by PurU via hydrolysis of 10-formyl-tetrahydrofolate. The sequence is that of Formate-dependent phosphoribosylglycinamide formyltransferase from Alcanivorax borkumensis (strain ATCC 700651 / DSM 11573 / NCIMB 13689 / SK2).